The following is a 132-amino-acid chain: Small ribosomal subunit protein uS8 (132 aa).

This sequence belongs to the universal ribosomal protein uS8 family. Part of the 30S ribosomal subunit. Contacts proteins S5 and S12.

Its function is as follows. One of the primary rRNA binding proteins, it binds directly to 16S rRNA central domain where it helps coordinate assembly of the platform of the 30S subunit. This Staphylococcus saprophyticus subsp. saprophyticus (strain ATCC 15305 / DSM 20229 / NCIMB 8711 / NCTC 7292 / S-41) protein is Small ribosomal subunit protein uS8.